We begin with the raw amino-acid sequence, 1507 residues long: Transient receptor potential cation channel subfamily M member 2 (1507 aa).

Basic and acidic residues predominate over residues Met1 to Ser11. Positions Met1–Ala24 are disordered. At Met1–Gly751 the chain is on the cytoplasmic side. ADP-D-ribose contacts are provided by Thr173, Asn178, Arg301, Gly332, and Thr335. Phosphothreonine is present on Thr739. An intramembrane segment occupies Leu752 to Gly768. Topologically, residues Phe769–Pro793 are cytoplasmic. Residues Val794–Val814 form a helical membrane-spanning segment. Topologically, residues Leu815–Trp825 are extracellular. The chain crosses the membrane as a helical span at residues Cys826 to Phe846. 2 residues coordinate Ca(2+): Glu841 and Gln844. At Tyr847–Phe865 the chain is on the cytoplasmic side. Residues Trp866–Ile886 traverse the membrane as a helical segment. Ca(2+) is bound at residue Asn867. Residues Pro887 to Arg894 lie on the Extracellular side of the membrane. A helical transmembrane segment spans residues Ile895–Ser915. Residues Lys916–Arg927 are Cytoplasmic-facing. The chain crosses the membrane as a helical span at residues Met928 to Val948. Residues Ala949–Val968 are Extracellular-facing. The pore-forming intramembrane region spans Ile969–Tyr983. A Selectivity filter motif is present at residues Phe977–Ile980. Topologically, residues Ile984 to Glu1020 are extracellular. The cysteines at positions 994 and 1006 are disulfide-linked. The helical transmembrane segment at Trp1021–Leu1042 threads the bilayer. Over Ile1043–Pro1077 the chain is Cytoplasmic. Residue Glu1071 participates in Ca(2+) binding. An intramembrane segment occupies Ala1078–Val1096. Topologically, residues Leu1097–Phe1507 are cytoplasmic. The region spanning Arg1351 to Leu1502 is the Nudix hydrolase domain. An ADP-D-ribose-binding site is contributed by Ser1379. The short motif at Gly1387–Trp1408 is the Nudix box element. ADP-D-ribose contacts are provided by Asp1428, Arg1430, Tyr1489, and Asn1491.

Belongs to the transient receptor (TC 1.A.4) family. LTrpC subfamily. TRPM2 sub-subfamily. As to quaternary structure, homotetramer. In terms of processing, phosphorylation of TRPM2 at Thr-739 by protein kinase C (PKC) counteracts the effect of cytosolic Ca(2+) and elevates the temperature threshold. As to expression, detected in pancreas beta-cells. Detected in fetal brain cortex neurons (at protein level).

It is found in the cell membrane. The protein resides in the perikaryon. The protein localises to the cell projection. It localises to the cytoplasmic vesicle. Its subcellular location is the lysosome. The enzyme catalyses Ca(2+)(in) = Ca(2+)(out). It carries out the reaction Na(+)(in) = Na(+)(out). Activated by intracellular ADP-ribose, beta-NAD (NAD(+)) and similar compounds, and by oxidative stress caused by reactive oxygen or nitrogen species. Ca(2+) and PI(4,5)P2 are required for channel opening by ADP-ribose. Activation by ADP-ribose and beta-NAD is strongly increased by moderate heat (35 to 40 degrees Celsius). Likewise, reactive oxygen species lower the threshold for activation by moderate heat (37 degrees Celsius). Activated by moderate heat (35 to 40 degrees Celsius). Inactivated by exposure to extracellular pH between 4.0 and 6.5; irreversibly inactivated when open channels are exposed to extracellular pH between 4.0 and 6.5, while pre-exposure of closed channels to extracellular pH 5.5 gives rise to currents that rapidly inactivate, but protects against irreversible inactivation. Inactivated by intracellular ATP. Activated by arachidonic acid. Inhibited by 2-aminoethyl diphenylborinate (2-APB). Functionally, nonselective, voltage-independent cation channel that mediates Na(+) and Ca(2+) influx, leading to increased cytoplasmic Ca(2+) levels. Functions as a ligand-gated ion channel gated by intracellular adenosine diphosphate ribose (ADP-ribose), Ca(2+), warm temperature, and oxidative stress. The precise physiological activators are under debate; the true, physiological activators may be ADP-ribose and ADP-ribose-2'-phosphate. Binding of ADP-ribose to the cytoplasmic Nudix domain causes a conformation change; the channel is primed but still requires Ca(2+) binding to trigger channel opening. Extracellular Ca(2+) passes through the channel and increases channel activity. Also contributes to Ca(2+) release from intracellular stores in response to ADP-ribose. Plays a role in numerous processes that involve signaling via intracellular Ca(2+) levels. Besides, mediates the release of lysosomal Zn(2+) stores in response to reactive oxygen species, leading to increased cytosolic Zn(2+) levels. Plays a role in insulin secretion, a process that requires increased cytoplasmic Ca(2+) levels. Required for normal IFNG and cytokine secretion and normal innate immune immunity in response to bacterial infection. Required for normal phagocytosis and cytokine release by macrophages exposed to zymosan (in vitro). Plays a role in dendritic cell differentiation and maturation, and in dendritic cell chemotaxis via its role in regulating cytoplasmic Ca(2+) levels. Plays a role in the regulation of the reorganization of the actin cytoskeleton and filopodia formation in response to reactive oxygen species via its function in increasing cytoplasmic Ca(2+) and Zn(2+) levels. Confers susceptibility to cell death following oxidative stress. The chain is Transient receptor potential cation channel subfamily M member 2 from Rattus norvegicus (Rat).